The chain runs to 657 residues: Transketolase (657 aa).

Substrate is bound at residue H31. Residues H71 and 120-122 contribute to the thiamine diphosphate site; that span reads GPL. A Mg(2+)-binding site is contributed by D158. Positions 159 and 188 each coordinate thiamine diphosphate. Mg(2+) is bound by residues N188 and I190. Substrate contacts are provided by H262, R354, and S381. H262 contacts thiamine diphosphate. E408 acts as the Proton donor in catalysis. A thiamine diphosphate-binding site is contributed by F434. Residues H458, D466, and R517 each contribute to the substrate site.

This sequence belongs to the transketolase family. In terms of assembly, homodimer. Mg(2+) is required as a cofactor. The cofactor is Ca(2+). Mn(2+) serves as cofactor. Requires Co(2+) as cofactor. It depends on thiamine diphosphate as a cofactor.

The enzyme catalyses D-sedoheptulose 7-phosphate + D-glyceraldehyde 3-phosphate = aldehydo-D-ribose 5-phosphate + D-xylulose 5-phosphate. It participates in carbohydrate biosynthesis; Calvin cycle. Its pathway is carbohydrate degradation; pentose phosphate pathway. Functionally, catalyzes the transfer of a two-carbon ketol group from a ketose donor to an aldose acceptor, via a covalent intermediate with the cofactor thiamine pyrophosphate. The protein is Transketolase (tklB) of Cereibacter sphaeroides (Rhodobacter sphaeroides).